Consider the following 1277-residue polypeptide: Clustered mitochondria protein 1 (1277 aa).

Disordered stretches follow at residues 19–39 (LPKEDNHSHNTKHLKKTQSSK) and 148–176 (LPLGPIKERSKQEEKDEKSDPEEKKNTFK). Over residues 27–36 (HNTKHLKKTQ) the composition is skewed to basic residues. Over residues 153 to 176 (IKERSKQEEKDEKSDPEEKKNTFK) the composition is skewed to basic and acidic residues. A Clu domain is found at 339–596 (PPNNPDYLRL…NTYPLDINFA (258 aa)). 3 TPR repeats span residues 704–738 (GINMRYLGKIIELSQKELDSQIVHYEQNLKAVEQD), 1020–1053 (AEKYLSLSAIYNKLALYPEAIAFCRKACTIYERV), and 1148–1181 (GYTESRLGNLFAALKDFHRALEHITVTQGIFTKQ). Residues 1212 to 1277 (LAQDQMSTTG…TNNKKKHGKK (66 aa)) form a disordered region. The span at 1235 to 1249 (KKDDVKPELANKSVD) shows a compositional bias: basic and acidic residues. At Ser-1247 the chain carries Phosphoserine. Over residues 1264–1277 (SKNKTNNKKKHGKK) the composition is skewed to basic residues.

Belongs to the CLU family. In terms of assembly, may associate with the eukaryotic translation initiation factor 3 (eIF-3) complex. Associates with the 80S ribosome.

It localises to the cytoplasm. MRNA-binding protein involved in proper cytoplasmic distribution of mitochondria. The polypeptide is Clustered mitochondria protein 1 (Saccharomyces cerevisiae (strain ATCC 204508 / S288c) (Baker's yeast)).